We begin with the raw amino-acid sequence, 423 residues long: Serine/threonine-protein kinase ppk25 (423 aa).

Ser36 and Ser38 each carry phosphoserine. Residues Trp53–Leu305 form the Protein kinase domain. ATP contacts are provided by residues Ile59–Val67 and Lys82. The Proton acceptor role is filled by Asp175.

Belongs to the protein kinase superfamily. Ser/Thr protein kinase family.

It is found in the cytoplasm. It catalyses the reaction L-seryl-[protein] + ATP = O-phospho-L-seryl-[protein] + ADP + H(+). It carries out the reaction L-threonyl-[protein] + ATP = O-phospho-L-threonyl-[protein] + ADP + H(+). This Schizosaccharomyces pombe (strain 972 / ATCC 24843) (Fission yeast) protein is Serine/threonine-protein kinase ppk25 (ppk25).